The following is a 1296-amino-acid chain: Phosphoribosylformylglycinamidine synthase (1296 aa).

Residues 300–325 form a disordered region; that stretch reads APFSGAATGSGGEIRDEGATGRGSKP. Residues 304–315 and Ala675 contribute to the ATP site; that span reads GAATGSGGEIRD. Positions 715, 719, and 885 each coordinate Mg(2+). Position 887 (Ser887) interacts with ATP. The Glutamine amidotransferase type-1 domain maps to 1043 to 1296; that stretch reads MAILREQGVN…MFRNARKNVG (254 aa). Cys1136 acts as the Nucleophile in catalysis. Positions 1232-1253 are disordered; sequence TQYPANPNGSPEGITGITSTDG. Residues His1261 and Glu1263 contribute to the active site.

In the N-terminal section; belongs to the FGAMS family. As to quaternary structure, monomer.

It is found in the cytoplasm. The enzyme catalyses N(2)-formyl-N(1)-(5-phospho-beta-D-ribosyl)glycinamide + L-glutamine + ATP + H2O = 2-formamido-N(1)-(5-O-phospho-beta-D-ribosyl)acetamidine + L-glutamate + ADP + phosphate + H(+). It participates in purine metabolism; IMP biosynthesis via de novo pathway; 5-amino-1-(5-phospho-D-ribosyl)imidazole from N(2)-formyl-N(1)-(5-phospho-D-ribosyl)glycinamide: step 1/2. Functionally, phosphoribosylformylglycinamidine synthase involved in the purines biosynthetic pathway. Catalyzes the ATP-dependent conversion of formylglycinamide ribonucleotide (FGAR) and glutamine to yield formylglycinamidine ribonucleotide (FGAM) and glutamate. This is Phosphoribosylformylglycinamidine synthase from Pseudoalteromonas translucida (strain TAC 125).